We begin with the raw amino-acid sequence, 546 residues long: Peptidoglycan transport ATP-binding protein YejF (546 aa).

2 consecutive ABC transporter domains span residues 12 to 261 and 291 to 530; these read VRDL…RHLL and IKAG…KALL. Residues 46 to 53 and 323 to 330 contribute to the ATP site; these read GESGSGKS and GESGSGKT.

It belongs to the ABC transporter superfamily. The complex is composed of one ATP-binding protein (YejF), two transmembrane proteins (YejB and YejE) and a solute-binding protein (YepA or YejA).

The protein localises to the cell inner membrane. Its function is as follows. Part of the ABC transporter complex YejBEF-YepA involved in the uptake of muropeptides, the breakdown products of cell wall peptidoglycan. The import of muropeptides into the cell enables peptidoglycan recycling, which is vital for cell wall integrity in this bacterium. Is also probably part of the ABC transporter complex YejABEF, which is likely involved in broad-spectrum peptide import. Responsible for energy coupling to the transport system. This Agrobacterium fabrum (strain C58 / ATCC 33970) (Agrobacterium tumefaciens (strain C58)) protein is Peptidoglycan transport ATP-binding protein YejF.